The following is a 500-amino-acid chain: Endothelial lipase (500 aa).

Positions 1-20 are cleaved as a signal peptide; it reads MRNTVFLLGFWSVYCYFPAG. Residues C64 and C77 are joined by a disulfide bond. 3 N-linked (GlcNAc...) asparagine glycosylation sites follow: N65, N80, and N136. S169 (nucleophile) is an active-site residue. D193 (charge relay system) is an active-site residue. A disulfide bond links C252 and C272. Catalysis depends on H274, which acts as the Charge relay system. Disulfide bonds link C297–C316 and C308–C311. 325 to 337 serves as a coordination point for heparin; it reads KMRKKRNSKMYLK. Residues 347–482 enclose the PLAT domain; that stretch reads YHYQLKVHMF…SPGQELWFHK (136 aa). N359 and N393 each carry an N-linked (GlcNAc...) asparagine glycan. A disulfide bridge links C463 with C483. N491 is a glycosylation site (N-linked (GlcNAc...) asparagine).

Belongs to the AB hydrolase superfamily. Lipase family. In terms of assembly, head to tail homodimer. Expressed in placenta, lung, liver, testis and spleen.

Its subcellular location is the secreted. It carries out the reaction a triacylglycerol + H2O = a diacylglycerol + a fatty acid + H(+). The catalysed reaction is a 1,2-diacyl-sn-glycero-3-phosphocholine + H2O = a 2-acyl-sn-glycero-3-phosphocholine + a fatty acid + H(+). The enzyme catalyses 1,2,3-tri-(9Z-octadecenoyl)-glycerol + H2O = di-(9Z)-octadecenoylglycerol + (9Z)-octadecenoate + H(+). It catalyses the reaction 1,2,3-tributanoylglycerol + H2O = dibutanoylglycerol + butanoate + H(+). It carries out the reaction 1,2-dihexadecanoyl-sn-glycero-3-phosphocholine + H2O = hexadecanoyl-sn-glycero-3-phosphocholine + hexadecanoate + H(+). Its function is as follows. Exerts both phospholipase and triglyceride lipase activities. More active as a phospholipase than a triglyceride lipase. Hydrolyzes triglycerides, both with short-chain fatty acyl groups (tributyrin) and long-chain fatty acyl groups (triolein) with similar levels of activity toward both types of substrates. Hydrolyzes high density lipoproteins (HDL) more efficiently than other lipoproteins. The protein is Endothelial lipase (Lipg) of Mus musculus (Mouse).